The sequence spans 513 residues: Lysine--tRNA ligase (513 aa).

The Mg(2+) site is built by Glu423 and Glu430.

It belongs to the class-II aminoacyl-tRNA synthetase family. In terms of assembly, homodimer. The cofactor is Mg(2+).

It localises to the cytoplasm. It carries out the reaction tRNA(Lys) + L-lysine + ATP = L-lysyl-tRNA(Lys) + AMP + diphosphate. The polypeptide is Lysine--tRNA ligase (Anaeromyxobacter dehalogenans (strain 2CP-C)).